The sequence spans 330 residues: MSAEASGSSGGHAVTVSGSSPSSSSHVGEEKPGRSLVSSKYVKLNVGGTLHYTTVQTLSKEDSLLRSICDGSTEVSIDSEGWVVLDRCGRHFSLVLNFLRDGTVPLPDSTRELEEVLKEAQYYRLQGLVQHCLSTLQKRRDVCRGCHIPMITSAKEEQRMIATCRKPVVKLQNNRGNNKYSYTSNSDDNLLKNIELFDKLGLRFNGRVLFIKDVLGDEICCWSFYGEGRKIAEVCCTSIVYATEKKQTKVEFPEARIFEETLNILIYENGRGSGGMALLESGGVSSSGAGQSEEEGAGAGGGDRRVRRIHVRRHIMHDERGHGQQTVYKD.

Residues Met1–Arg34 are disordered. Residues Lys40–Asp108 enclose the BTB domain. Residues Gly282–Gln291 are compositionally biased toward low complexity. The interval Gly282–Arg304 is disordered.

Belongs to the BACURD family.

It is found in the nucleus. Functionally, substrate-specific adapter of a BCR (BTB-CUL3-RBX1) E3 ubiquitin-protein ligase complex required for synaptic transmission. The BCR(KCTD13) E3 ubiquitin ligase complex mediates the ubiquitination of RHOA, leading to its degradation by the proteasome, thereby regulating the actin cytoskeleton and promoting synaptic transmission. In Danio rerio (Zebrafish), this protein is BTB/POZ domain-containing adapter for CUL3-mediated RhoA degradation protein 1.